The following is a 161-amino-acid chain: Ubiquitin D (161 aa).

Ubiquitin-like domains lie at 3 to 77 (SCVC…LKVV) and 86 to 159 (LSLV…AHCI).

The protein belongs to the ubiquitin D family. In terms of assembly, interacts directly with the 26S proteasome. Interacts with NUB1; this interaction facilitates the linking of UBD-conjugated target protein to the proteasome complex and accelerates its own degradation and that of its conjugates. Interacts (via ubiquitin-like 1 domain) with the spindle checkpoint protein MAD2L1 during mitosis. Present in aggresomes of proteasome inhibited cells. Interacts with HDAC6 under proteasome impairment conditions. Forms a thioester with UBA6 in cells stimulated with tumor necrosis factor-alpha (TNFa) and interferon-gamma (IFNg). Interacts with SQSTM1 and TP53/p53. Can be acetylated.

The protein localises to the nucleus. It localises to the cytoplasm. Functionally, ubiquitin-like protein modifier which can be covalently attached to target proteins and subsequently leads to their degradation by the 26S proteasome, in a NUB1-dependent manner. Conjugation to the target protein is activated by UBA6 via adenylation of its C-terminal glycine. Probably functions as a survival factor. Promotes the expression of the proteasome subunit beta type-9 (PSMB9/LMP2). Regulates TNF-alpha-induced and LPS-mediated activation of the central mediator of innate immunity NF-kappa-B by promoting TNF-alpha-mediated proteasomal degradation of ubiquitinated-I-kappa-B-alpha. Required for TNF-alpha-induced p65 nuclear translocation in renal tubular epithelial cells (RTECs). May be involved in dendritic cell (DC) maturation, the process by which immature dendritic cells differentiate into fully competent antigen-presenting cells that initiate T-cell responses. Mediates mitotic non-disjunction and chromosome instability, in long-term in vitro culture and cancers, by abbreviating mitotic phase and impairing the kinetochore localization of MAD2L1 during the prometaphase stage of the cell cycle. May be involved in the formation of aggresomes when proteasome is saturated or impaired. Mediates apoptosis in a caspase-dependent manner, especially in renal epithelium and tubular cells during renal diseases. The protein is Ubiquitin D (Ubd) of Rattus norvegicus (Rat).